The sequence spans 327 residues: Flotillin-like protein FloA (327 aa).

2 consecutive transmembrane segments (helical) span residues 6–26 (VLFF…FTFV) and 28–48 (IMLW…TLVG).

It belongs to the flotillin-like FloA family. In terms of assembly, homooligomerizes.

The protein resides in the cell membrane. It is found in the membrane raft. In terms of biological role, found in functional membrane microdomains (FMM) that may be equivalent to eukaryotic membrane rafts. FMMs are highly dynamic and increase in number as cells age. Flotillins are thought to be important factors in membrane fluidity. In Priestia megaterium (strain DSM 319 / IMG 1521) (Bacillus megaterium), this protein is Flotillin-like protein FloA.